A 102-amino-acid chain; its full sequence is Large ribosomal subunit protein bL21 (102 aa).

The protein belongs to the bacterial ribosomal protein bL21 family. Part of the 50S ribosomal subunit. Contacts protein L20.

This protein binds to 23S rRNA in the presence of protein L20. The polypeptide is Large ribosomal subunit protein bL21 (Cutibacterium acnes (strain DSM 16379 / KPA171202) (Propionibacterium acnes)).